Consider the following 269-residue polypeptide: Proline-rich protein 7 (269 aa).

Residues 1–9 (MVMSQGTYT) are Extracellular-facing. The tract at residues 1 to 44 (MVMSQGTYTFLTCFAGFWLIWGLIVLLCCFCSFLRRRLKRRQEE) is required for interaction with NMDA receptors. The segment at 2–39 (VMSQGTYTFLTCFAGFWLIWGLIVLLCCFCSFLRRRLK) is required for membrane localization. The chain crosses the membrane as a helical; Signal-anchor for type III membrane protein span at residues 10–30 (FLTCFAGFWLIWGLIVLLCCF). Over 31-269 (CSFLRRRLKR…IPLFGRTTAV (239 aa)) the chain is Cytoplasmic. Disordered regions lie at residues 63 to 83 (GSLAGSPPGLAPPPPPHRSRL) and 97 to 121 (PLLHHGPAPPHAHPHPHHHALPHPP). Phosphoserine is present on Ser-64. The segment covering 108–117 (AHPHPHHHAL) has biased composition (basic residues). The required for internalization stretch occupies residues 146–166 (PCYEEAVLMAEPPPPYSEVLT). A required for apoptosis induction region spans residues 146-269 (PCYEEAVLMA…IPLFGRTTAV (124 aa)). The PDZ-binding signature appears at 267–269 (TAV).

In terms of assembly, forms a complex with NMDA receptor zeta subunit GRIN1 and epsilon subunit GRIN2B. Interacts with GRIN2B. Interacts with GRIN1; the interaction is reduced upon NMDA receptor activity. Found in a postsynaptic membrane complex with DLG4 and GRIN1. Interacts with DLG4 (via PDZ3 domain and to lesser degree via PDZ2 domain). Interacts with JUN. Found in a complex with JUN and FBXW7. Interacts with JUN and FBXW7; the interaction inhibits ubiquitination-mediated JUN degradation promoting its phosphorylation and transcriptional activity. Interacts with SRC. Post-translationally, palmitoylated. In terms of processing, tyrosine phosphorylated, possibly by SRC. As to expression, highly expressed in brain, moderately expressed in lymph nodes and T cells and low expression in thymus and spleen. Expressed in single positive progenitor thymocytes, particularly in CD8 single positive thymocytes.

It is found in the cell membrane. It localises to the postsynaptic cell membrane. The protein resides in the postsynaptic density membrane. Its subcellular location is the cytoplasm. The protein localises to the perinuclear region. It is found in the synapse. It localises to the cell projection. The protein resides in the dendrite. Its subcellular location is the nucleus. Acts as a synapse-to-nucleus messenger to promote NMDA receptor-mediated excitotoxicity in neurons in a JUN-dependent manner. Inhibits ubiquitination-mediated degradation and promotes phosphorylation and transcriptional activity of transcription factor JUN. Might play a redundant role in the regulation of T cell receptor signaling. Might promote apoptosis in T cells. The chain is Proline-rich protein 7 (Prr7) from Mus musculus (Mouse).